The following is a 150-amino-acid chain: UPF0208 membrane protein VC_1099 (150 aa).

A run of 2 helical transmembrane segments spans residues 42–62 and 70–90; these read FAIKVMPAVAAISVLTQMVFA and AIVVALFAMSLPLQGIWWLGH.

This sequence belongs to the UPF0208 family.

The protein localises to the cell inner membrane. The protein is UPF0208 membrane protein VC_1099 of Vibrio cholerae serotype O1 (strain ATCC 39315 / El Tor Inaba N16961).